A 262-amino-acid chain; its full sequence is 4-hydroxy-2-oxo-heptane-1,7-dioate aldolase (262 aa).

Histidine 45 serves as the catalytic Proton acceptor. Glutamine 147 provides a ligand contact to substrate. Residue glutamate 149 coordinates a divalent metal cation. Residues alanine 174 and aspartate 175 each contribute to the substrate site. Aspartate 175 is an a divalent metal cation binding site.

The protein belongs to the HpcH/HpaI aldolase family. As to quaternary structure, homohexamer; trimer of dimers. A divalent metal cation serves as cofactor.

The catalysed reaction is 4-hydroxy-2-oxoheptanedioate = succinate semialdehyde + pyruvate. The enzyme catalyses D-glyceraldehyde + 3-hydroxypyruvate = (3R,4S,5R)-3,4,5,6-tetrahydroxy-2-oxohexanoate. It carries out the reaction D-glyceraldehyde + 3-hydroxypyruvate = 2-dehydro-D-gluconate. It catalyses the reaction D-glyceraldehyde + 3-hydroxypyruvate = 2-dehydro-D-galactonate. The catalysed reaction is D-glyceraldehyde + pyruvate = 2-dehydro-3-deoxy-L-galactonate. The enzyme catalyses 2-dehydro-3-deoxy-D-gluconate = D-glyceraldehyde + pyruvate. Its pathway is aromatic compound metabolism; 4-hydroxyphenylacetate degradation; pyruvate and succinate semialdehyde from 4-hydroxyphenylacetate: step 7/7. Functionally, catalyzes the reversible retro-aldol cleavage of 4-hydroxy-2-ketoheptane-1,7-dioate (HKHD) to pyruvate and succinic semialdehyde. In vitro, can catalyze the aldolisation reaction between hydroxypyruvate (HPA) or pyruvate (PA) and D-glyceraldehyde (D-GA). The condensation of hydroxypyruvate and D-glyceraldehyde produces (3R,4S,5R)-3,4,5,6-tetrahydroxy-2-oxohexanoate as the major product, 2-dehydro-D-gluconate and 2-dehydro-D-galactonate. The condensation of pyruvate and D-glyceraldehyde produces 2-dehydro-3-deoxy-L-galactonate as the major product and 2-dehydro-3-deoxy-D-gluconate. This chain is 4-hydroxy-2-oxo-heptane-1,7-dioate aldolase, found in Escherichia coli (strain ATCC 8739 / DSM 1576 / NBRC 3972 / NCIMB 8545 / WDCM 00012 / Crooks).